The sequence spans 257 residues: Zinc uptake system ATP-binding protein ZurA (257 aa).

In terms of domain architecture, ABC transporter spans 5-241 (IEVNNVSYHY…ADRELEILAE (237 aa)). ATP is bound at residue 37 to 44 (GPNGSGKS).

This sequence belongs to the ABC transporter superfamily.

Its function is as follows. Involved in a zinc uptake transport system. This is Zinc uptake system ATP-binding protein ZurA (zurA) from Listeria monocytogenes serovar 1/2a (strain ATCC BAA-679 / EGD-e).